A 974-amino-acid chain; its full sequence is UvrABC system protein A (974 aa).

An ATP-binding site is contributed by 34-41 (GLSGSGKS). 2 consecutive ABC transporter domains span residues 331 to 610 (WARS…TNSL) and 630 to 959 (ISKT…QFLK). Residue 663–670 (GVSGGGKS) coordinates ATP. The C4-type zinc finger occupies 762 to 788 (CEACQGDGVIKIEMHFLPDVYVTCDVC).

This sequence belongs to the ABC transporter superfamily. UvrA family. In terms of assembly, forms a heterotetramer with UvrB during the search for lesions.

The protein resides in the cytoplasm. In terms of biological role, the UvrABC repair system catalyzes the recognition and processing of DNA lesions. UvrA is an ATPase and a DNA-binding protein. A damage recognition complex composed of 2 UvrA and 2 UvrB subunits scans DNA for abnormalities. When the presence of a lesion has been verified by UvrB, the UvrA molecules dissociate. This chain is UvrABC system protein A, found in Brucella melitensis biotype 1 (strain ATCC 23456 / CCUG 17765 / NCTC 10094 / 16M).